The following is a 580-amino-acid chain: Glypican-3 (580 aa).

The N-terminal stretch at 1-24 (MAGTVRTACLVVAMLLSLDFPGQA) is a signal peptide. Residue Gln-25 is modified to Pyrrolidone carboxylic acid. 7 disulfides stabilise this stretch: Cys-35–Cys-72, Cys-65–Cys-262, Cys-73–Cys-265, Cys-197–Cys-349, Cys-252–Cys-285, Cys-274–Cys-422, and Cys-278–Cys-410. Asn-124 and Asn-241 each carry an N-linked (GlcNAc...) asparagine glycan. Ser-352 bears the Phosphoserine; by FAM20C mark. Asn-418 carries an N-linked (GlcNAc...) asparagine glycan. 2 O-linked (Xyl...) (glycosaminoglycan) serine glycosylation sites follow: Ser-495 and Ser-509. Asn-554 is lipidated: GPI-anchor amidated asparagine. The propeptide at 555–580 (LGNVHSPLKLLTSMAISVVCFFFLVH) is removed in mature form.

This sequence belongs to the glypican family. In terms of assembly, heterodimer; disulfide-linked. Cleavage by a furin-like convertase results in production of alpha and beta chains which form a disulfide-linked heterodimer. Interacts with DPP4. Interacts with FGF2. Interacts with WNT5A. Also interacts with WNT3A and WNT7B. Interacts with hedgehog protein SHH; the heparan sulfate chains are not required for the interaction. Also interacts with hedgehog protein IHH. Interacts with CD81. Interacts with Wnt receptors FZD4, FZD7 and FZD8; the heparan sulfate chains are required for the interaction. O-glycosylated; contains heparan sulfate and/or chondroitin sulfate. In terms of processing, cleaved intracellularly by a furin-like convertase to generate 2 subunits, alpha and beta, which remain associated through disulfide bonds and are associated with the cell surface via the GPI-anchor. This processing is essential for its role in inhibition of hedgehog signaling. A second proteolytic event may result in cleavage of the protein on the cell surface, separating it from the GPI-anchor and leading to its shedding from the cell surface. In terms of tissue distribution, detected in placenta (at protein level). Highly expressed in lung, liver and kidney.

Its subcellular location is the cell membrane. In terms of biological role, cell surface proteoglycan. Negatively regulates the hedgehog signaling pathway when attached via the GPI-anchor to the cell surface by competing with the hedgehog receptor PTC1 for binding to hedgehog proteins. Binding to the hedgehog protein SHH triggers internalization of the complex by endocytosis and its subsequent lysosomal degradation. Positively regulates the canonical Wnt signaling pathway by binding to the Wnt receptor Frizzled and stimulating the binding of the Frizzled receptor to Wnt ligands. Positively regulates the non-canonical Wnt signaling pathway. Binds to CD81 which decreases the availability of free CD81 for binding to the transcriptional repressor HHEX, resulting in nuclear translocation of HHEX and transcriptional repression. Inhibits the dipeptidyl peptidase activity of DPP4. Plays a role in limb patterning and skeletal development by controlling the cellular response to BMP4. Modulates the effects of growth factors BMP2, BMP7 and FGF7 on renal branching morphogenesis. Required for coronary vascular development. Plays a role in regulating cell movements during gastrulation. The chain is Glypican-3 (GPC3) from Homo sapiens (Human).